We begin with the raw amino-acid sequence, 167 residues long: MKSLTLLTICAVLSVSLSMNDLALDVVLDPAPDPATEPAPAADSSASSSASSSSSSASDSSASASDSSDSDSSSASSSSSSSESASAEVTTEDPAAATEPEVVIMKRDLASVLLRRKRAAGQAAAAFTLTQVESLSEVCELNLACEHMAETAGIVAAYTAYYGPPPF.

A signal peptide spans 1–18 (MKSLTLLTICAVLSVSLS). Residues 19-118 (MNDLALDVVL…LASVLLRRKR (100 aa)) constitute a propeptide that is removed on maturation. Residues 28 to 99 (LDPAPDPATE…TTEDPAAATE (72 aa)) are disordered. Residues 38–87 (PAPAADSSASSSASSSSSSASDSSASASDSSDSDSSSASSSSSSSESASA) are compositionally biased toward low complexity. The region spanning 131–163 (QVESLSEVCELNLACEHMAETAGIVAAYTAYYG) is the Gla domain. Residues E133, E137, and E140 each coordinate Ca(2+). A 4-carboxyglutamate mark is found at E133, E137, and E140. C139 and C145 form a disulfide bridge.

Belongs to the osteocalcin/matrix Gla protein family. Gamma-carboxyglutamate residues are formed by vitamin K dependent carboxylation. These residues are essential for the binding of calcium.

It localises to the secreted. Binds strongly to apatite and calcium. This Oncorhynchus mykiss (Rainbow trout) protein is Osteocalcin 2a.